Consider the following 183-residue polypeptide: Large ribosomal subunit protein uL6 (183 aa).

The protein belongs to the universal ribosomal protein uL6 family. As to quaternary structure, part of the 50S ribosomal subunit.

Its function is as follows. This protein binds to the 23S rRNA, and is important in its secondary structure. It is located near the subunit interface in the base of the L7/L12 stalk, and near the tRNA binding site of the peptidyltransferase center. This chain is Large ribosomal subunit protein uL6, found in Methanococcus aeolicus (strain ATCC BAA-1280 / DSM 17508 / OCM 812 / Nankai-3).